The following is a 548-amino-acid chain: Probable thiamine biosynthetic bifunctional enzyme, chloroplastic (548 aa).

The span at 1–10 (MAAAPQQSVH) shows a compositional bias: polar residues. The tract at residues 1-40 (MAAAPQQSVHPSLPSSTSTLRLLISSSPRRPPPPPPRARR) is disordered. The N-terminal 47 residues, 1–47 (MAAAPQQSVHPSLPSSTSTLRLLISSSPRRPPPPPPRARRYNRLAAS), are a transit peptide targeting the chloroplast. The segment covering 11–28 (PSLPSSTSTLRLLISSSP) has biased composition (low complexity). Residues 372–376 (QLREK) and Asn404 contribute to the 4-amino-2-methyl-5-(diphosphooxymethyl)pyrimidine site. Asp405 and Asp424 together coordinate Mg(2+). Ser443 lines the 4-amino-2-methyl-5-(diphosphooxymethyl)pyrimidine pocket. 469–471 (TST) is a binding site for 2-[(2R,5Z)-2-carboxy-4-methylthiazol-5(2H)-ylidene]ethyl phosphate. A 4-amino-2-methyl-5-(diphosphooxymethyl)pyrimidine-binding site is contributed by Lys472. Residues Gly499 and 522-523 (VS) contribute to the 2-[(2R,5Z)-2-carboxy-4-methylthiazol-5(2H)-ylidene]ethyl phosphate site.

This sequence belongs to the thiamine-phosphate synthase family. Requires Mg(2+) as cofactor.

The protein localises to the plastid. Its subcellular location is the chloroplast. It catalyses the reaction 2-[(2R,5Z)-2-carboxy-4-methylthiazol-5(2H)-ylidene]ethyl phosphate + 4-amino-2-methyl-5-(diphosphooxymethyl)pyrimidine + 2 H(+) = thiamine phosphate + CO2 + diphosphate. The enzyme catalyses 2-(2-carboxy-4-methylthiazol-5-yl)ethyl phosphate + 4-amino-2-methyl-5-(diphosphooxymethyl)pyrimidine + 2 H(+) = thiamine phosphate + CO2 + diphosphate. It carries out the reaction 4-methyl-5-(2-phosphooxyethyl)-thiazole + 4-amino-2-methyl-5-(diphosphooxymethyl)pyrimidine + H(+) = thiamine phosphate + diphosphate. The catalysed reaction is 4-amino-5-hydroxymethyl-2-methylpyrimidine + ATP = 4-amino-2-methyl-5-(phosphooxymethyl)pyrimidine + ADP + H(+). It participates in cofactor biosynthesis; thiamine diphosphate biosynthesis; thiamine phosphate from 4-amino-2-methyl-5-diphosphomethylpyrimidine and 4-methyl-5-(2-phosphoethyl)-thiazole: step 1/1. Its pathway is cofactor biosynthesis; thiamine diphosphate biosynthesis; 4-amino-2-methyl-5-diphosphomethylpyrimidine from 5-amino-1-(5-phospho-D-ribosyl)imidazole: step 2/3. Its function is as follows. Essential for thiamine biosynthesis. Bifunctional enzyme that catalyzes the phosphorylation of hydroxymethylpyrimidine phosphate (HMP-P) to HMP-PP and condenses 4-methyl-5-(beta-hydroxyethyl)thiazole monophosphate (THZ-P) and 2-methyl-4-amino-5-hydroxymethyl pyrimidine pyrophosphate (HMP-PP) to form thiamine monophosphate (TMP). The chain is Probable thiamine biosynthetic bifunctional enzyme, chloroplastic from Oryza sativa subsp. japonica (Rice).